Consider the following 552-residue polypeptide: Probable protein kinase UbiB (552 aa).

The 384-residue stretch at 121–504 (HFDTVPLASA…QGLQRRVVNA (384 aa)) folds into the Protein kinase domain. ATP is bound by residues 127–135 (LASASISQV) and Lys-149. Asp-284 functions as the Proton acceptor in the catalytic mechanism. Helical transmembrane passes span 501–521 (VVNAIVGSGLLVAAAVLYGLH) and 530–550 (IPVWSLISGCVGALALFSAWW).

Belongs to the ABC1 family. UbiB subfamily.

It localises to the cell inner membrane. It functions in the pathway cofactor biosynthesis; ubiquinone biosynthesis [regulation]. Its function is as follows. Is probably a protein kinase regulator of UbiI activity which is involved in aerobic coenzyme Q (ubiquinone) biosynthesis. The protein is Probable protein kinase UbiB of Xylella fastidiosa (strain M12).